The chain runs to 134 residues: Galectin-1 (134 aa).

Ala1 carries the N-acetylalanine modification. One can recognise a Galectin domain in the interval 4-134 (GVAVTNLNLK…GLAFKSITTE (131 aa)). A beta-D-galactoside contacts are provided by residues 45 to 49 (HFNAR), His53, Asn62, and 69 to 72 (WGSE).

Homodimer.

The protein resides in the secreted. The protein localises to the extracellular space. Its subcellular location is the extracellular matrix. In terms of biological role, may regulate cell apoptosis and cell differentiation. Binds beta-galactoside and a wide array of complex carbohydrates. The protein is Galectin-1 of Rhinella arenarum (Argentine common toad).